The primary structure comprises 662 residues: Probable actin-related protein 8 (662 aa).

Composition is skewed to basic and acidic residues over residues 50–59 and 67–77; these read AGEKDAKETE and TKQDDSKKSQV. Residues 50–92 form a disordered region; it reads AGEKDAKETESESANGDTKQDDSKKSQVEEEEDGIEESELGEE. Acidic residues predominate over residues 78-89; that stretch reads EEEEDGIEESEL. 339–342 is a binding site for ATP; it reads DMGA.

Belongs to the actin family. Component of the chromatin remodeling Ino80 complex. Exists as monomers and dimers, but the dimer is most probably the biologically relevant form required for stable interactions with histones that exploits the twofold symmetry of the nucleosome core.

It localises to the nucleus. Its function is as follows. Probably involved in transcription regulation via its interaction with the INO80 complex, a chromatin remodeling complex. Exhibits low basal ATPase activity, and unable to polymerize. Strongly prefer nucleosomes and H3-H4 tetramers over H2A-H2B dimers, suggesting it may act as a nucleosome recognition module within the complex. The sequence is that of Probable actin-related protein 8 from Schizosaccharomyces pombe (strain 972 / ATCC 24843) (Fission yeast).